The sequence spans 663 residues: Alcohol oxidase 1 (663 aa).

8–38 serves as a coordination point for FAD; the sequence is DILVLGGGSSGSCIAGRLANLDHSLKVGLIE. His-567 functions as the Proton acceptor in the catalytic mechanism. The short motif at 661–663 is the Microbody targeting signal element; sequence ARF.

This sequence belongs to the GMC oxidoreductase family. As to quaternary structure, homooctamer. The cofactor is FAD.

It localises to the peroxisome matrix. The catalysed reaction is a primary alcohol + O2 = an aldehyde + H2O2. Its pathway is energy metabolism; methane degradation. Functionally, major isoform of alcohol oxidase, which catalyzes the oxidation of methanol to formaldehyde and hydrogen peroxide, the first step in the methanol utilization pathway of methylotrophic yeasts. This is Alcohol oxidase 1 (AOX1) from Komagataella phaffii (strain ATCC 76273 / CBS 7435 / CECT 11047 / NRRL Y-11430 / Wegner 21-1) (Yeast).